The sequence spans 115 residues: Large ribosomal subunit protein bL20c (115 aa).

It belongs to the bacterial ribosomal protein bL20 family.

Its subcellular location is the plastid. It localises to the chloroplast. In terms of biological role, binds directly to 23S ribosomal RNA and is necessary for the in vitro assembly process of the 50S ribosomal subunit. It is not involved in the protein synthesizing functions of that subunit. The chain is Large ribosomal subunit protein bL20c from Chaetosphaeridium globosum (Charophycean green alga).